A 403-amino-acid chain; its full sequence is CinA-like protein (403 aa).

It belongs to the CinA family.

The polypeptide is CinA-like protein (Petrotoga mobilis (strain DSM 10674 / SJ95)).